Reading from the N-terminus, the 304-residue chain is Beta-lactamase AER-1 (304 aa).

The signal sequence occupies residues 1–37 (MYVLSVEKPTLRNKFAAGIGVVLVCVVASFIPTPVFA). Catalysis depends on S83, which acts as the Acyl-ester intermediate. C90 and C137 are disulfide-bonded. Residues 173–195 (ETQLDRKEPELNEGTPGDVRDTT) form a disordered region. Substrate is bound at residue 248 to 250 (KTG).

The protein belongs to the class-A beta-lactamase family.

The enzyme catalyses a beta-lactam + H2O = a substituted beta-amino acid. In terms of biological role, hydrolyzes carbenicillin. Methicillin and oxacillin are weakly hydrolyzed. The chain is Beta-lactamase AER-1 (aer1) from Aeromonas hydrophila.